The primary structure comprises 488 residues: Dihydrolipoyl dehydrogenase, mitochondrial (488 aa).

The transit peptide at 1-25 directs the protein to the mitochondrion; that stretch reads MLRINRISNLRTFGQRFFSTEQQDV. Residues 52-61, Lys70, Gly134, and 163-165 contribute to the FAD site; these read EKRGKLGGTC and TGS. Residues Cys61 and Cys66 are joined by a disulfide bond. Residues 200-207, Glu223, Val257, and Gly294 contribute to the NAD(+) site; that span reads GGGVIGLE. FAD-binding positions include Asp335 and 341–344; that span reads MLAH. The Proton acceptor role is filled by His467.

The protein belongs to the class-I pyridine nucleotide-disulfide oxidoreductase family. The cofactor is FAD.

Its subcellular location is the mitochondrion matrix. It carries out the reaction N(6)-[(R)-dihydrolipoyl]-L-lysyl-[protein] + NAD(+) = N(6)-[(R)-lipoyl]-L-lysyl-[protein] + NADH + H(+). This Dictyostelium discoideum (Social amoeba) protein is Dihydrolipoyl dehydrogenase, mitochondrial (lpd).